Here is a 169-residue protein sequence, read N- to C-terminus: 6,7-dimethyl-8-ribityllumazine synthase (169 aa).

Residues Phe-24, 58–60 (ALE), and 82–84 (AVV) each bind 5-amino-6-(D-ribitylamino)uracil. 87–88 (ET) serves as a coordination point for (2S)-2-hydroxy-3-oxobutyl phosphate. His-90 acts as the Proton donor in catalysis. Residue Asn-115 participates in 5-amino-6-(D-ribitylamino)uracil binding. Arg-129 is a binding site for (2S)-2-hydroxy-3-oxobutyl phosphate.

It belongs to the DMRL synthase family.

The enzyme catalyses (2S)-2-hydroxy-3-oxobutyl phosphate + 5-amino-6-(D-ribitylamino)uracil = 6,7-dimethyl-8-(1-D-ribityl)lumazine + phosphate + 2 H2O + H(+). It participates in cofactor biosynthesis; riboflavin biosynthesis; riboflavin from 2-hydroxy-3-oxobutyl phosphate and 5-amino-6-(D-ribitylamino)uracil: step 1/2. Catalyzes the formation of 6,7-dimethyl-8-ribityllumazine by condensation of 5-amino-6-(D-ribitylamino)uracil with 3,4-dihydroxy-2-butanone 4-phosphate. This is the penultimate step in the biosynthesis of riboflavin. This chain is 6,7-dimethyl-8-ribityllumazine synthase, found in Cupriavidus metallidurans (strain ATCC 43123 / DSM 2839 / NBRC 102507 / CH34) (Ralstonia metallidurans).